Consider the following 91-residue polypeptide: Small ribosomal subunit protein bS20 (91 aa).

The protein belongs to the bacterial ribosomal protein bS20 family.

In terms of biological role, binds directly to 16S ribosomal RNA. This chain is Small ribosomal subunit protein bS20, found in Thermosipho melanesiensis (strain DSM 12029 / CIP 104789 / BI429).